We begin with the raw amino-acid sequence, 1946 residues long: Sickle tail protein (1946 aa).

2 disordered regions span residues 1 to 83 (MEES…GMQP) and 113 to 176 (ERLR…VRSA). The segment covering 18–36 (DSRQMPQQGRSNLHVTSQE) has biased composition (polar residues). A compositionally biased stretch (basic and acidic residues) spans 38–47 (AACRRPRERL). At serine 169 the chain carries Phosphoserine. Phosphotyrosine is present on tyrosine 244. 2 disordered regions span residues 305 to 324 (HPPH…HSLP) and 339 to 374 (AIPG…RDVK). The segment covering 308–324 (HVIPNSPPSTPVPHSLP) has biased composition (pro residues). Positions 352–367 (SSLPVSRSISPSPSAI) are enriched in low complexity. O-linked (GlcNAc) serine glycosylation is present at serine 357. A phosphoserine mark is found at serine 361 and serine 365. Tyrosine 393 is subject to Phosphotyrosine. Residues 455–512 (SRKYPDSHLPTLGSKTPPASPHRVGDLRMIDLHPHLNTHGPPHTLQPDRASPSRQSFK) form a disordered region. Threonine 470 is modified (phosphothreonine). A Phosphoserine modification is found at serine 474. Residues 477-488 (RVGDLRMIDLHP) show a composition bias toward basic and acidic residues. 2 coiled-coil regions span residues 557-581 (RETR…QSAL) and 644-685 (TSLL…ELEI). At serine 809 the chain carries Phosphoserine. Disordered stretches follow at residues 853–875 (EETA…DVKS) and 891–947 (SPVV…PVNG). Composition is skewed to polar residues over residues 891 to 909 (SPVV…NPAQ) and 927 to 947 (QEVT…PVNG). Residues 962–990 (SAKNRAVSIEKAEKKWEEKRQNLEHYNGK) adopt a coiled-coil conformation. A disordered region spans residues 1008–1221 (PNLEMPPASS…LRPSGPPKWE (214 aa)). Phosphoserine occurs at positions 1032, 1035, 1038, and 1049. Pro residues predominate over residues 1049–1058 (SPPPPPPPPR). Positions 1151–1162 (NPNSHAEQSRAN) are enriched in polar residues. The span at 1176–1194 (PKEKKNLEFYHEDVRKSDV) shows a compositional bias: basic and acidic residues. Phosphoserine is present on serine 1466. A coiled-coil region spans residues 1469 to 1495 (FEECDEELERMLTEEKIEEEEEDENED). Disordered regions lie at residues 1482 to 1567 (EEKI…VDDQ), 1622 to 1664 (AKRF…RKST), and 1691 to 1946 (VDTS…KETS). Residues 1484–1495 (KIEEEEEDENED) show a composition bias toward acidic residues. A compositionally biased stretch (polar residues) spans 1498–1508 (VRTSSQMSCEQ). 2 stretches are compositionally biased toward basic and acidic residues: residues 1509–1518 (VDSRSDRMGQ) and 1622–1644 (AKRF…RRQE). A coiled-coil region spans residues 1659–1688 (EIRKSTYRTLDSLEQTIKQLENTISEMSPR). The span at 1739–1759 (KGSSTTPQTSRMPVPMTSKNR) shows a compositional bias: polar residues. The residue at position 1741 (serine 1741) is a Phosphoserine. Residues 1765–1777 (KASKQSKLQDPRQ) are compositionally biased toward basic and acidic residues. A compositionally biased stretch (low complexity) spans 1806–1825 (ALSPSSGKSSSLPSASGDSS). Serine 1843 carries the post-translational modification Phosphoserine. Polar residues predominate over residues 1851–1866 (HSASLIPSVSNGSLKF). The segment covering 1890-1899 (AAPTTSSSSS) has biased composition (low complexity). 3 positions are modified to phosphoserine: serine 1899, serine 1902, and serine 1905. Residues 1920–1946 (HTPSLASYKAQNGSSSKATPSTAKETS) show a composition bias toward polar residues.

In terms of assembly, interacts with CPNE4 (via VWFA domain). As to expression, expressed predominantly in the notochord and mesonephros during embryogenesis as well as in other areas such as the epithalamus sulcus, lens vesicle, inner retinal layer, heart, hepatic primordial surface, infundibulum, surface ectoderm, hind gut and limb bud mesenchyme. In adults, expressed in a range of tissues including the nucleus pulposus, corpus callosum, kidney, cardiac muscle, Sertoli cells and hair follicles.

It localises to the cytoplasm. The protein localises to the cytoskeleton. Its subcellular location is the microtubule organizing center. It is found in the centrosome. In terms of biological role, required for normal development of intervertebral disks. The protein is Sickle tail protein of Mus musculus (Mouse).